The following is a 928-amino-acid chain: Isoleucine--tRNA ligase (928 aa).

The 'HIGH' region motif lies at 57-67 (PFANGNIHMGH). E554 is a binding site for L-isoleucyl-5'-AMP. The 'KMSKS' region signature appears at 595-599 (KMSKS). An ATP-binding site is contributed by K598. Residues C887, C890, C907, and C910 each contribute to the Zn(2+) site.

The protein belongs to the class-I aminoacyl-tRNA synthetase family. IleS type 1 subfamily. In terms of assembly, monomer. Zn(2+) serves as cofactor.

The protein resides in the cytoplasm. The enzyme catalyses tRNA(Ile) + L-isoleucine + ATP = L-isoleucyl-tRNA(Ile) + AMP + diphosphate. Catalyzes the attachment of isoleucine to tRNA(Ile). As IleRS can inadvertently accommodate and process structurally similar amino acids such as valine, to avoid such errors it has two additional distinct tRNA(Ile)-dependent editing activities. One activity is designated as 'pretransfer' editing and involves the hydrolysis of activated Val-AMP. The other activity is designated 'posttransfer' editing and involves deacylation of mischarged Val-tRNA(Ile). The chain is Isoleucine--tRNA ligase from Lactobacillus johnsonii (strain CNCM I-12250 / La1 / NCC 533).